Reading from the N-terminus, the 188-residue chain is Gamma-glutamylcyclotransferase (188 aa).

A substrate-binding site is contributed by 19–22 (YFAY). Glutamate 98 functions as the Proton acceptor in the catalytic mechanism. Serine 173 is modified (phosphoserine).

It belongs to the gamma-glutamylcyclotransferase family. Homodimer.

It catalyses the reaction an alpha-(gamma-L-glutamyl)-L-amino acid = 5-oxo-L-proline + an L-alpha-amino acid. In terms of biological role, catalyzes the formation of 5-oxoproline from gamma-glutamyl dipeptides and may play a significant role in glutathione homeostasis. Induces release of cytochrome c from mitochondria with resultant induction of apoptosis. This is Gamma-glutamylcyclotransferase (Ggct) from Mus musculus (Mouse).